The chain runs to 253 residues: Phosphate import ATP-binding protein PstB (253 aa).

An ABC transporter domain is found at Met-7–Ile-248. Gly-39–Ser-46 contacts ATP.

This sequence belongs to the ABC transporter superfamily. Phosphate importer (TC 3.A.1.7) family. As to quaternary structure, the complex is composed of two ATP-binding proteins (PstB), two transmembrane proteins (PstC and PstA) and a solute-binding protein (PstS).

The protein resides in the cell inner membrane. The catalysed reaction is phosphate(out) + ATP + H2O = ADP + 2 phosphate(in) + H(+). Its function is as follows. Part of the ABC transporter complex PstSACB involved in phosphate import. Responsible for energy coupling to the transport system. This is Phosphate import ATP-binding protein PstB from Oleidesulfovibrio alaskensis (strain ATCC BAA-1058 / DSM 17464 / G20) (Desulfovibrio alaskensis).